Consider the following 485-residue polypeptide: Glutamyl-tRNA(Gln) amidotransferase subunit A (485 aa).

Residues Lys76 and Ser152 each act as charge relay system in the active site. The active-site Acyl-ester intermediate is Ser176.

Belongs to the amidase family. GatA subfamily. In terms of assembly, heterotrimer of A, B and C subunits.

The enzyme catalyses L-glutamyl-tRNA(Gln) + L-glutamine + ATP + H2O = L-glutaminyl-tRNA(Gln) + L-glutamate + ADP + phosphate + H(+). Its function is as follows. Allows the formation of correctly charged Gln-tRNA(Gln) through the transamidation of misacylated Glu-tRNA(Gln) in organisms which lack glutaminyl-tRNA synthetase. The reaction takes place in the presence of glutamine and ATP through an activated gamma-phospho-Glu-tRNA(Gln). In Dechloromonas aromatica (strain RCB), this protein is Glutamyl-tRNA(Gln) amidotransferase subunit A.